The chain runs to 185 residues: MEYWSSSFIDGASSSSFISPFYNFDHFSGNQDNRCLGTMMGAQQDILHVPLAMVESGYGEESNSFNGQEKKKKKMTSEQLKFLERSFQEEIKLNPDRKMKLNPDRKMKLSKELGLQPRQIAVWFQNRKARWKNKQLEHLYESLRQEFDIVSREKELLQEELIQLKSMIREDSSCKKKQTWEKACS.

A DNA-binding region (homeobox) is located at residues 76–135 (TSEQLKFLERSFQEEIKLNPDRKMKLNPDRKMKLSKELGLQPRQIAVWFQNRKARWKNKQ). The segment at 136–164 (LEHLYESLRQEFDIVSREKELLQEELIQL) is leucine-zipper.

The protein belongs to the HD-ZIP homeobox family. Class I subfamily. As to expression, expressed in siliques.

Its subcellular location is the nucleus. In terms of biological role, probable transcription factor. The polypeptide is Homeobox-leucine zipper protein ATHB-22 (ATHB-22) (Arabidopsis thaliana (Mouse-ear cress)).